Consider the following 170-residue polypeptide: Adenine phosphoribosyltransferase (170 aa).

The protein belongs to the purine/pyrimidine phosphoribosyltransferase family. In terms of assembly, homodimer.

It localises to the cytoplasm. It carries out the reaction AMP + diphosphate = 5-phospho-alpha-D-ribose 1-diphosphate + adenine. The protein operates within purine metabolism; AMP biosynthesis via salvage pathway; AMP from adenine: step 1/1. In terms of biological role, catalyzes a salvage reaction resulting in the formation of AMP, that is energically less costly than de novo synthesis. This chain is Adenine phosphoribosyltransferase, found in Flavobacterium johnsoniae (strain ATCC 17061 / DSM 2064 / JCM 8514 / BCRC 14874 / CCUG 350202 / NBRC 14942 / NCIMB 11054 / UW101) (Cytophaga johnsonae).